A 64-amino-acid polypeptide reads, in one-letter code: Large ribosomal subunit protein uL30 (64 aa).

This sequence belongs to the universal ribosomal protein uL30 family. Part of the 50S ribosomal subunit.

This Methylorubrum populi (strain ATCC BAA-705 / NCIMB 13946 / BJ001) (Methylobacterium populi) protein is Large ribosomal subunit protein uL30.